We begin with the raw amino-acid sequence, 344 residues long: Methionine import ATP-binding protein MetN (344 aa).

An ABC transporter domain is found at 2 to 241 (LELKQVGKVY…PQAEVTKAFV (240 aa)). ATP is bound at residue 38–45 (GYSGAGKS).

Belongs to the ABC transporter superfamily. Methionine importer (TC 3.A.1.24) family. In terms of assembly, the complex is composed of two ATP-binding proteins (MetN), two transmembrane proteins (MetI) and a solute-binding protein (MetQ).

The protein resides in the cell membrane. The enzyme catalyses L-methionine(out) + ATP + H2O = L-methionine(in) + ADP + phosphate + H(+). It catalyses the reaction D-methionine(out) + ATP + H2O = D-methionine(in) + ADP + phosphate + H(+). Its function is as follows. Part of the ABC transporter complex MetNIQ involved in methionine import. Responsible for energy coupling to the transport system. The polypeptide is Methionine import ATP-binding protein MetN (Latilactobacillus sakei subsp. sakei (strain 23K) (Lactobacillus sakei subsp. sakei)).